Consider the following 22-residue polypeptide: Chlorophyllase type 1 (22 aa).

The protein belongs to the AB hydrolase superfamily. Lipase family.

The catalysed reaction is a chlorophyll + H2O = a chlorophyllide + phytol + H(+). Its pathway is porphyrin-containing compound metabolism; chlorophyll degradation. Functionally, catalyzes the hydrolysis of ester bond in chlorophyll to yield chlorophyllide and phytol. In Chenopodium album (Fat hen), this protein is Chlorophyllase type 1.